Consider the following 270-residue polypeptide: Putative phosphoenolpyruvate synthase regulatory protein (270 aa).

An ADP-binding site is contributed by 154–161; it reads GVSRAGKT.

This sequence belongs to the pyruvate, phosphate/water dikinase regulatory protein family. PSRP subfamily.

It catalyses the reaction [pyruvate, water dikinase] + ADP = [pyruvate, water dikinase]-phosphate + AMP + H(+). The catalysed reaction is [pyruvate, water dikinase]-phosphate + phosphate + H(+) = [pyruvate, water dikinase] + diphosphate. In terms of biological role, bifunctional serine/threonine kinase and phosphorylase involved in the regulation of the phosphoenolpyruvate synthase (PEPS) by catalyzing its phosphorylation/dephosphorylation. The chain is Putative phosphoenolpyruvate synthase regulatory protein from Deinococcus geothermalis (strain DSM 11300 / CIP 105573 / AG-3a).